The chain runs to 200 residues: Outer-membrane lipoprotein carrier protein (200 aa).

The first 18 residues, 1 to 18 (MKAVVFAMVMAVSFNVFA), serve as a signal peptide directing secretion.

It belongs to the LolA family. In terms of assembly, monomer.

It localises to the periplasm. In terms of biological role, participates in the translocation of lipoproteins from the inner membrane to the outer membrane. Only forms a complex with a lipoprotein if the residue after the N-terminal Cys is not an aspartate (The Asp acts as a targeting signal to indicate that the lipoprotein should stay in the inner membrane). The chain is Outer-membrane lipoprotein carrier protein from Idiomarina loihiensis (strain ATCC BAA-735 / DSM 15497 / L2-TR).